We begin with the raw amino-acid sequence, 148 residues long: Receptor activity-modifying protein 1 (148 aa).

The N-terminal stretch at 1–26 is a signal peptide; it reads MARALCRLPRRGLWLLLAHHLFMTTA. Cystine bridges form between C27-C82, C40-C72, and C57-C104. The Extracellular segment spans residues 27–118; that stretch reads CQEANYGALL…RAVRDPPGSI (92 aa). Residues 119–140 traverse the membrane as a helical segment; sequence LYPFIVVPITVTLLVTALVVWQ. The Cytoplasmic portion of the chain corresponds to 141 to 148; the sequence is SKRTEGIV.

The protein belongs to the RAMP family. Heterodimer of CALCRL and RAMP1; the interaction induces allosteric modulation of CALCRL function and CGRP1/CALCA and CGRP2/CALCB ligand specificity. Heterodimer of CALCR and RAMP1; interaction forms the AMYR1 receptor complex for amylin/IAPP and CGRP1/CALCA ligands. Expressed in many tissues including the uterus, bladder, brain, pancreas and gastro-intestinal tract.

The protein localises to the cell membrane. In terms of biological role, accessory protein that interacts with and modulates the function of G-protein coupled receptors including calcitonin gene-related peptide type 1 receptor (CALCRL) and calcitonin receptor (CALCR). Required for the transport of CALCRL to the plasma membrane. Together with CALCRL, form the receptor complex for the calcitonin gene-related peptides CGRP1/CALCA and CGRP2/CALCB. Together with CALCR, form the AMYR1 receptor complex for amylin/IAPP and CGRP1/CALCA. In Homo sapiens (Human), this protein is Receptor activity-modifying protein 1.